We begin with the raw amino-acid sequence, 817 residues long: LPS-assembly protein LptD (817 aa).

The first 45 residues, 1–45 (MDRLPLPHALHVPTHRPFAAPLPPRRLLARLAALMLCGVPLAVLA), serve as a signal peptide directing secretion.

It belongs to the LptD family. Component of the lipopolysaccharide transport and assembly complex. Interacts with LptE and LptA.

The protein localises to the cell outer membrane. Together with LptE, is involved in the assembly of lipopolysaccharide (LPS) at the surface of the outer membrane. This is LPS-assembly protein LptD from Acidovorax sp. (strain JS42).